A 473-amino-acid polypeptide reads, in one-letter code: Glutamate-1-semialdehyde 2,1-aminomutase, chloroplastic (473 aa).

The N-terminal 37 residues, 1-37 (MSATLTGSGTALGFSCSSKISKRVSSSPSTRCSIKMS), are a transit peptide targeting the chloroplast. Position 313 is an N6-(pyridoxal phosphate)lysine (Lys313).

The protein belongs to the class-III pyridoxal-phosphate-dependent aminotransferase family. HemL subfamily. Homodimer. Requires pyridoxal 5'-phosphate as cofactor.

The protein localises to the plastid. Its subcellular location is the chloroplast. The catalysed reaction is (S)-4-amino-5-oxopentanoate = 5-aminolevulinate. The protein operates within porphyrin-containing compound metabolism; protoporphyrin-IX biosynthesis; 5-aminolevulinate from L-glutamyl-tRNA(Glu): step 2/2. It participates in porphyrin-containing compound metabolism; chlorophyll biosynthesis. This chain is Glutamate-1-semialdehyde 2,1-aminomutase, chloroplastic (GSA), found in Brassica napus (Rape).